The following is a 96-amino-acid chain: Aspartyl/glutamyl-tRNA(Asn/Gln) amidotransferase subunit C (96 aa).

It belongs to the GatC family. As to quaternary structure, heterotrimer of A, B and C subunits.

The enzyme catalyses L-glutamyl-tRNA(Gln) + L-glutamine + ATP + H2O = L-glutaminyl-tRNA(Gln) + L-glutamate + ADP + phosphate + H(+). The catalysed reaction is L-aspartyl-tRNA(Asn) + L-glutamine + ATP + H2O = L-asparaginyl-tRNA(Asn) + L-glutamate + ADP + phosphate + 2 H(+). Functionally, allows the formation of correctly charged Asn-tRNA(Asn) or Gln-tRNA(Gln) through the transamidation of misacylated Asp-tRNA(Asn) or Glu-tRNA(Gln) in organisms which lack either or both of asparaginyl-tRNA or glutaminyl-tRNA synthetases. The reaction takes place in the presence of glutamine and ATP through an activated phospho-Asp-tRNA(Asn) or phospho-Glu-tRNA(Gln). In Herpetosiphon aurantiacus (strain ATCC 23779 / DSM 785 / 114-95), this protein is Aspartyl/glutamyl-tRNA(Asn/Gln) amidotransferase subunit C.